Here is a 1220-residue protein sequence, read N- to C-terminus: DNA-directed RNA polymerase subunit beta (1220 aa).

Belongs to the RNA polymerase beta chain family. In terms of assembly, the RNAP catalytic core consists of 2 alpha, 1 beta, 1 beta' and 1 omega subunit. When a sigma factor is associated with the core the holoenzyme is formed, which can initiate transcription.

The enzyme catalyses RNA(n) + a ribonucleoside 5'-triphosphate = RNA(n+1) + diphosphate. Its function is as follows. DNA-dependent RNA polymerase catalyzes the transcription of DNA into RNA using the four ribonucleoside triphosphates as substrates. This chain is DNA-directed RNA polymerase subunit beta, found in Mesomycoplasma hyopneumoniae (strain 232) (Mycoplasma hyopneumoniae).